The primary structure comprises 517 residues: Membrane-bound lytic murein transglycosylase F (517 aa).

The signal sequence occupies residues 1-32; it reads MKKFKINYLLIGIVTLLLAAALWPSIPWFGKA. Residues 33 to 269 are non-LT domain; the sequence is ENRIAAIQSR…RLEEKYLGHG (237 aa). Residues 270-517 are LT domain; it reads GDFDYVDTRS…PNTLVQAPRR (248 aa). Residue Glu314 is part of the active site.

The protein in the N-terminal section; belongs to the bacterial solute-binding protein 3 family. It in the C-terminal section; belongs to the transglycosylase Slt family.

It is found in the cell outer membrane. The catalysed reaction is Exolytic cleavage of the (1-&gt;4)-beta-glycosidic linkage between N-acetylmuramic acid (MurNAc) and N-acetylglucosamine (GlcNAc) residues in peptidoglycan, from either the reducing or the non-reducing ends of the peptidoglycan chains, with concomitant formation of a 1,6-anhydrobond in the MurNAc residue.. In terms of biological role, murein-degrading enzyme that degrades murein glycan strands and insoluble, high-molecular weight murein sacculi, with the concomitant formation of a 1,6-anhydromuramoyl product. Lytic transglycosylases (LTs) play an integral role in the metabolism of the peptidoglycan (PG) sacculus. Their lytic action creates space within the PG sacculus to allow for its expansion as well as for the insertion of various structures such as secretion systems and flagella. The sequence is that of Membrane-bound lytic murein transglycosylase F from Enterobacter sp. (strain 638).